A 671-amino-acid polypeptide reads, in one-letter code: Probable potassium transport system protein Kup 2 (671 aa).

A run of 12 helical transmembrane segments spans residues 18–38 (GFLI…LYAM), 60–80 (VSLV…LIAL), 103–123 (WLII…ALTP), 146–166 (AVMV…RFGA), 173–193 (FGPI…INSF), 218–238 (AGFF…ALYS), 252–272 (WPFV…WLLA), 292–312 (MVIY…QALI), 343–363 (LYIP…VLYF), 373–393 (YSLA…YFLI), 402–422 (IAII…ASLV), and 424–444 (FING…VMFI).

It belongs to the HAK/KUP transporter (TC 2.A.72) family.

Its subcellular location is the cell membrane. It catalyses the reaction K(+)(in) + H(+)(in) = K(+)(out) + H(+)(out). Its function is as follows. Transport of potassium into the cell. Likely operates as a K(+):H(+) symporter. The sequence is that of Probable potassium transport system protein Kup 2 from Lactococcus lactis subsp. lactis (strain IL1403) (Streptococcus lactis).